A 470-amino-acid chain; its full sequence is Sugar transporter ERD6-like 8 (470 aa).

Residues 1–16 are compositionally biased toward basic and acidic residues; sequence METRKDDMEKRNDKSE. Positions 1–24 are disordered; the sequence is METRKDDMEKRNDKSEPLLLPENG. 12 helical membrane passes run 33 to 53, 73 to 93, 110 to 130, 133 to 153, 164 to 184, 188 to 208, 270 to 290, 307 to 327, 335 to 355, 373 to 393, 409 to 429, and 434 to 454; these read WMVYLSTIIAVCGSYEFGTCV, QFSVFGSILNMGAVLGAITSG, VISAIGWLIIYLAKGDVPLDF, FLTGYGCGTLSFVVPVFIAEI, TLNQLFIVIGLASMFLIGAVV, TLALTGVAPCVVLFFGTWFIP, FVIVGVGLMFFQQFVGINGVI, GSILYSIEQVVLTALGATLLI, LLMASAVGMLIGCLLIGNSFL, GVLVYIGSFSIGMGAIPWVIM, VTVVNWLSSWLVSFTFNFLMI, and GTFYVYGGVCVLAIIFIAKLV.

It belongs to the major facilitator superfamily. Sugar transporter (TC 2.A.1.1) family.

The protein resides in the membrane. In terms of biological role, sugar transporter. The sequence is that of Sugar transporter ERD6-like 8 from Arabidopsis thaliana (Mouse-ear cress).